The sequence spans 208 residues: Interleukin-6 (208 aa).

The N-terminal stretch at 1 to 20 is a signal peptide; sequence MNSLSTIAFSLGLLLVTATA. Cys-67 and Cys-73 are oxidised to a cystine. The residue at position 76 (Ser-76) is a Phosphoserine. A disulfide bridge links Cys-96 with Cys-106. An N-linked (GlcNAc...) asparagine glycan is attached at Asn-167.

The protein belongs to the IL-6 superfamily. Component of a hexamer of two molecules each of IL6, IL6R and IL6ST; first binds to IL6R to associate with the signaling subunit IL6ST. Interacts with IL6R (via the N-terminal ectodomain); this interaction may be affected by IL6R-binding with SORL1, hence decreasing IL6 cis signaling. Interacts with SORL1 (via the N-terminal ectodomain); this interaction leads to IL6 internalization and lysosomal degradation. May form a trimeric complex with the soluble SORL1 ectodomain and soluble IL6R receptor; this interaction might stabilize circulating IL6, hence promoting IL6 trans signaling.

It is found in the secreted. Its function is as follows. Cytokine with a wide variety of biological functions in immunity, tissue regeneration, and metabolism. Binds to IL6R, then the complex associates to the signaling subunit IL6ST/gp130 to trigger the intracellular IL6-signaling pathway. The interaction with the membrane-bound IL6R and IL6ST stimulates 'classic signaling', whereas the binding of IL6 and soluble IL6R to IL6ST stimulates 'trans-signaling'. Alternatively, 'cluster signaling' occurs when membrane-bound IL6:IL6R complexes on transmitter cells activate IL6ST receptors on neighboring receiver cells. In terms of biological role, IL6 is a potent inducer of the acute phase response. Rapid production of IL6 contributes to host defense during infection and tissue injury, but excessive IL6 synthesis is involved in disease pathology. In the innate immune response, is synthesized by myeloid cells, such as macrophages and dendritic cells, upon recognition of pathogens through toll-like receptors (TLRs) at the site of infection or tissue injury. In the adaptive immune response, is required for the differentiation of B cells into immunoglobulin-secreting cells. Plays a major role in the differentiation of CD4(+) T cell subsets. Essential factor for the development of T follicular helper (Tfh) cells that are required for the induction of germinal-center formation. Required to drive naive CD4(+) T cells to the Th17 lineage. Also required for proliferation of myeloma cells and the survival of plasmablast cells. Functionally, acts as an essential factor in bone homeostasis and on vessels directly or indirectly by induction of VEGF, resulting in increased angiogenesis activity and vascular permeability. Induces, through 'trans-signaling' and synergistically with IL1B and TNF, the production of VEGF. Involved in metabolic controls, is discharged into the bloodstream after muscle contraction increasing lipolysis and improving insulin resistance. 'Trans-signaling' in central nervous system also regulates energy and glucose homeostasis. Mediates, through GLP-1, crosstalk between insulin-sensitive tissues, intestinal L cells and pancreatic islets to adapt to changes in insulin demand. Also acts as a myokine. Plays a protective role during liver injury, being required for maintenance of tissue regeneration. Also has a pivotal role in iron metabolism by regulating HAMP/hepcidin expression upon inflammation or bacterial infection. Through activation of IL6ST-YAP-NOTCH pathway, induces inflammation-induced epithelial regeneration. This chain is Interleukin-6 (IL6), found in Delphinapterus leucas (Beluga whale).